A 219-amino-acid polypeptide reads, in one-letter code: Sugar fermentation stimulation protein homolog (219 aa).

Belongs to the SfsA family.

In Archaeoglobus fulgidus (strain ATCC 49558 / DSM 4304 / JCM 9628 / NBRC 100126 / VC-16), this protein is Sugar fermentation stimulation protein homolog.